Reading from the N-terminus, the 113-residue chain is Immunoglobulin lambda variable 2-23 (113 aa).

The signal sequence occupies residues 1–19; it reads MAWALLLLTLLTQDTGSWA. Residue Q20 is modified to Pyrrolidone carboxylic acid. Residues 20–44 form a framework-1 region; the sequence is QSALTQPASVSGSPGQSITISCTGT. One can recognise an Ig-like domain in the interval 20 to 113; that stretch reads QSALTQPASV…EADYYCCSYA (94 aa). Cysteines 41 and 109 form a disulfide. The interval 45–53 is complementarity-determining-1; it reads SSDVGSYNL. The framework-2 stretch occupies residues 54 to 70; the sequence is VSWYQQHPGKAPKLMIY. Positions 71–73 are complementarity-determining-2; the sequence is EGS. The tract at residues 73–92 is disordered; that stretch reads SKRPSGVSNRFSGSKSGNTA. The tract at residues 74–109 is framework-3; it reads KRPSGVSNRFSGSKSGNTASLTISGLQAEDEADYYC. Residues 78–92 show a composition bias toward polar residues; it reads GVSNRFSGSKSGNTA. Positions 110-113 are complementarity-determining-3; it reads CSYA.

In terms of assembly, immunoglobulins are composed of two identical heavy chains and two identical light chains; disulfide-linked.

It is found in the secreted. The protein resides in the cell membrane. Functionally, v region of the variable domain of immunoglobulin light chains that participates in the antigen recognition. Immunoglobulins, also known as antibodies, are membrane-bound or secreted glycoproteins produced by B lymphocytes. In the recognition phase of humoral immunity, the membrane-bound immunoglobulins serve as receptors which, upon binding of a specific antigen, trigger the clonal expansion and differentiation of B lymphocytes into immunoglobulins-secreting plasma cells. Secreted immunoglobulins mediate the effector phase of humoral immunity, which results in the elimination of bound antigens. The antigen binding site is formed by the variable domain of one heavy chain, together with that of its associated light chain. Thus, each immunoglobulin has two antigen binding sites with remarkable affinity for a particular antigen. The variable domains are assembled by a process called V-(D)-J rearrangement and can then be subjected to somatic hypermutations which, after exposure to antigen and selection, allow affinity maturation for a particular antigen. This Homo sapiens (Human) protein is Immunoglobulin lambda variable 2-23.